Consider the following 784-residue polypeptide: LPS-assembly protein LptD (784 aa).

The first 24 residues, 1–24 (MKKRIPTLLATMIASALYSHQGLA), serve as a signal peptide directing secretion. 2 disulfides stabilise this stretch: C31/C724 and C173/C725.

The protein belongs to the LptD family. As to quaternary structure, component of the lipopolysaccharide transport and assembly complex. Interacts with LptE and LptA. Contains two intramolecular disulfide bonds.

It is found in the cell outer membrane. In terms of biological role, together with LptE, is involved in the assembly of lipopolysaccharide (LPS) at the surface of the outer membrane. This Salmonella paratyphi A (strain ATCC 9150 / SARB42) protein is LPS-assembly protein LptD.